The sequence spans 622 residues: Intermediate filament protein ifc-2 (622 aa).

Residues 19 to 54 (SGTYASGFGQLVSGMSSAGAICTTQIRDAREREKRE) form a head region. The region spanning 51 to 399 (EKREIGLLND…ILLNGANVTT (349 aa)) is the IF rod domain. The coil 1A stretch occupies residues 55-86 (IGLLNDRLADYIEKVRFLEAQNRCLSHDIDIL). The linker 1 stretch occupies residues 87-99 (RNGFSGGGHVSGL). The interval 100–237 (FDAEINQAKH…TENNVRIEQE (138 aa)) is coil 1B. Positions 238 to 255 (LVFIRRDTTADNRDYFRH) are linker 12. Residues 256–399 (ELQAAIRDIR…ILLNGANVTT (144 aa)) form a coil 2 region. Residues 400–550 (YTSNTHGSGS…RVDVGGFRIE (151 aa)) form a tail region. Residues 509–622 (SGRHFHSWYL…EERAWFVYLD (114 aa)) form the LTD domain.

It belongs to the intermediate filament family. As to expression, expressed in intestinal cells and at desmosomes in intestine and pharynx of the larva.

Its subcellular location is the cytoplasm. Cytoplasmic intermediate filaments provide mechanical strength to cells. Not essential protein, although its absence leads to mild defects in locomotion. The protein is Intermediate filament protein ifc-2 (ifc-2) of Caenorhabditis elegans.